Reading from the N-terminus, the 654-residue chain is Peptide-N(4)-(N-acetyl-beta-glucosaminyl)asparagine amidase (654 aa).

Ala2 is subject to N-acetylalanine. In terms of domain architecture, PUB spans 30 to 91 (EASKLLLTYA…EGETHLIFPK (62 aa)). Over residues 112 to 123 (RLDGSNKSHKVE) the composition is skewed to basic and acidic residues. Residues 112–167 (RLDGSNKSHKVESSQQPAASTQLPTTPSSNPSGLNQHTRNRQGQSPDPPSASTVTP) form a disordered region. Polar residues predominate over residues 124-167 (SSQQPAASTQLPTTPSSNPSGLNQHTRNRQGQSPDPPSASTVTP). Thr137 is subject to Phosphothreonine. Zn(2+) contacts are provided by Cys250, Cys253, Cys283, and Cys286. Cys309 (nucleophile) is an active-site residue. Catalysis depends on residues His336 and Asp353. One can recognise a PAW domain in the interval 454 to 654 (ELGGRISGSV…LEIIIKFSDL (201 aa)).

Belongs to the transglutaminase-like superfamily. PNGase family. As to quaternary structure, component of a complex required to couple retrotranslocation, ubiquitination and deglycosylation composed of NGLY1, SAKS1, AMFR, VCP and RAD23B. Interacts with the proteasome components RAD23B and PSMC1. Interacts with directly with VCP. Interacts with DERL1, bringing it close to the endoplasmic reticulum membrane. Interacts with SAKS1. Zn(2+) serves as cofactor.

It localises to the cytoplasm. The enzyme catalyses Hydrolysis of an N(4)-(acetyl-beta-D-glucosaminyl)asparagine residue in which the glucosamine residue may be further glycosylated, to yield a (substituted) N-acetyl-beta-D-glucosaminylamine and a peptide containing an aspartate residue.. Inhibited by Z-VAD-fmk, a well-known caspase inhibitor, which inhibits enzyme activity through covalent binding of the carbohydrate to the single Cys-306 residue. In terms of biological role, specifically deglycosylates the denatured form of N-linked glycoproteins in the cytoplasm and assists their proteasome-mediated degradation. Cleaves the beta-aspartyl-glucosamine (GlcNAc) of the glycan and the amide side chain of Asn, converting Asn to Asp. Prefers proteins containing high-mannose over those bearing complex type oligosaccharides. Can recognize misfolded proteins in the endoplasmic reticulum that are exported to the cytosol to be destroyed and deglycosylate them, while it has no activity toward native proteins. Deglycosylation is a prerequisite for subsequent proteasome-mediated degradation of some, but not all, misfolded glycoproteins. The polypeptide is Peptide-N(4)-(N-acetyl-beta-glucosaminyl)asparagine amidase (NGLY1) (Macaca fascicularis (Crab-eating macaque)).